A 330-amino-acid chain; its full sequence is Aquaporin Lacbi1:307192 (330 aa).

The Cytoplasmic portion of the chain corresponds to Met1–Glu40. Residues Ala41 to Gly61 form a helical membrane-spanning segment. Over Asn62–Ser71 the chain is Extracellular. A helical transmembrane segment spans residues Val72–Ala92. At Thr93–Gln124 the chain is on the cytoplasmic side. An NPA 1 motif is present at residues Asn99 to Cys101. The helical transmembrane segment at Ile125–Glu145 threads the bilayer. The Extracellular portion of the chain corresponds to Ser146 to Glu157. Residues Thr158–Ala178 form a helical membrane-spanning segment. Residues Gln179–Arg183 lie on the Cytoplasmic side of the membrane. Residues Ala184–Asp204 form a helical membrane-spanning segment. Over Pro205–Ser207 the chain is Extracellular. The chain crosses the membrane as a helical span at residues Phe208–Trp228. Topologically, residues Gly229 to Ala264 are cytoplasmic. Positions Asn238–Ala240 match the NPA 2 motif. Residues Ile265–Leu285 form a helical membrane-spanning segment. The Extracellular portion of the chain corresponds to Val286–Val330. The tract at residues Arg308–Val330 is disordered. Basic and acidic residues predominate over residues Gln312 to Val330.

The protein belongs to the MIP/aquaporin (TC 1.A.8) family.

Its subcellular location is the membrane. Its function is as follows. Water channel-like protein that does not show transport of water nor ammonium across membranes. The protein is Aquaporin Lacbi1:307192 of Laccaria bicolor (strain S238N-H82 / ATCC MYA-4686) (Bicoloured deceiver).